A 948-amino-acid chain; its full sequence is Glycine dehydrogenase (decarboxylating) (948 aa).

At lysine 696 the chain carries N6-(pyridoxal phosphate)lysine.

This sequence belongs to the GcvP family. The glycine cleavage system is composed of four proteins: P, T, L and H. Pyridoxal 5'-phosphate serves as cofactor.

The catalysed reaction is N(6)-[(R)-lipoyl]-L-lysyl-[glycine-cleavage complex H protein] + glycine + H(+) = N(6)-[(R)-S(8)-aminomethyldihydrolipoyl]-L-lysyl-[glycine-cleavage complex H protein] + CO2. Its function is as follows. The glycine cleavage system catalyzes the degradation of glycine. The P protein binds the alpha-amino group of glycine through its pyridoxal phosphate cofactor; CO(2) is released and the remaining methylamine moiety is then transferred to the lipoamide cofactor of the H protein. This Akkermansia muciniphila (strain ATCC BAA-835 / DSM 22959 / JCM 33894 / BCRC 81048 / CCUG 64013 / CIP 107961 / Muc) protein is Glycine dehydrogenase (decarboxylating).